A 528-amino-acid chain; its full sequence is Putative ABC transporter ATP-binding protein MA_1418 (528 aa).

ABC transporter domains follow at residues 2-242 (IELR…TNLT) and 262-494 (ISVK…SDYK). ATP contacts are provided by residues 36-43 (GHSAAGKT) and 294-301 (GENGSGKT).

It belongs to the ABC transporter superfamily.

The protein resides in the cell membrane. Functionally, probably part of an ABC transporter complex. Responsible for energy coupling to the transport system. This Methanosarcina acetivorans (strain ATCC 35395 / DSM 2834 / JCM 12185 / C2A) protein is Putative ABC transporter ATP-binding protein MA_1418.